Consider the following 146-residue polypeptide: Small ribosomal subunit protein bS6 (146 aa).

Residues 100-146 (QSAMMRKRDDDDRGDRPDRGDRGRGPRPDRPPRRPRDDAAASDEGGF) form a disordered region. Residues 105–138 (RKRDDDDRGDRPDRGDRGRGPRPDRPPRRPRDDA) are compositionally biased toward basic and acidic residues.

This sequence belongs to the bacterial ribosomal protein bS6 family.

Binds together with bS18 to 16S ribosomal RNA. This is Small ribosomal subunit protein bS6 from Methylocella silvestris (strain DSM 15510 / CIP 108128 / LMG 27833 / NCIMB 13906 / BL2).